A 298-amino-acid chain; its full sequence is Ribosomal protein L11 methyltransferase (298 aa).

The S-adenosyl-L-methionine site is built by threonine 152, glycine 176, aspartate 198, and asparagine 236.

This sequence belongs to the methyltransferase superfamily. PrmA family.

It is found in the cytoplasm. The enzyme catalyses L-lysyl-[protein] + 3 S-adenosyl-L-methionine = N(6),N(6),N(6)-trimethyl-L-lysyl-[protein] + 3 S-adenosyl-L-homocysteine + 3 H(+). Methylates ribosomal protein L11. The polypeptide is Ribosomal protein L11 methyltransferase (Polaromonas sp. (strain JS666 / ATCC BAA-500)).